Consider the following 60-residue polypeptide: Single-pass membrane and coiled-coil domain-containing protein 4 homolog (60 aa).

Residues 1–22 form a disordered region; sequence MRKLRGGQTRETRKQKQERREE. The segment covering 8–22 has biased composition (basic and acidic residues); the sequence is QTRETRKQKQERREE. Residues 8-34 are a coiled coil; sequence QTRETRKQKQERREENQKIQQQLKTIV. The chain crosses the membrane as a helical span at residues 30–50; sequence LKTIVLPICGVVFLCIVAYVF.

The protein belongs to the SMCO4 family.

Its subcellular location is the membrane. This Culex quinquefasciatus (Southern house mosquito) protein is Single-pass membrane and coiled-coil domain-containing protein 4 homolog.